The following is a 464-amino-acid chain: Chromosomal replication initiator protein DnaA (464 aa).

A domain I, interacts with DnaA modulators region spans residues 1 to 82 (MSLSLWQQCL…LLRFEVGSKP (82 aa)). The domain II stretch occupies residues 82 to 127 (PITQVISQTVTASVSSAPAAPAARTAAPSRPSWDNAAAQPELSYRS). Low complexity predominate over residues 98 to 113 (APAAPAARTAAPSRPS). Positions 98 to 117 (APAAPAARTAAPSRPSWDNA) are disordered. Positions 128 to 344 (NVNPKHTFDN…GALNRVIANA (217 aa)) are domain III, AAA+ region. Residues glycine 172, glycine 174, lysine 175, and threonine 176 each contribute to the ATP site. Residues 345–464 (NFTGRAITID…FSNLIRTLSS (120 aa)) form a domain IV, binds dsDNA region.

The protein belongs to the DnaA family. Oligomerizes as a right-handed, spiral filament on DNA at oriC.

It localises to the cytoplasm. Plays an important role in the initiation and regulation of chromosomal replication. Binds to the origin of replication; it binds specifically double-stranded DNA at a 9 bp consensus (dnaA box): 5'-TTATC[CA]A[CA]A-3'. DnaA binds to ATP and to acidic phospholipids. DnaA can inhibit its own gene expression as well as that of other genes. Functionally, plays an essential role in the initiation and regulation of chromosomal replication. ATP-DnaA binds to the origin of replication (oriC) to initiate formation of the DNA replication initiation complex once per cell cycle. Binds the DnaA box (a 9 base pair repeat at the origin) and separates the double-stranded (ds)DNA. Forms a right-handed helical filament on oriC DNA; dsDNA binds to the exterior of the filament while single-stranded (ss)DNA is stabiized in the filament's interior. The ATP-DnaA-oriC complex binds and stabilizes one strand of the AT-rich DNA unwinding element (DUE), permitting loading of DNA polymerase. After initiation quickly degrades to an ADP-DnaA complex that is not apt for DNA replication. Binds acidic phospholipids. In Serratia marcescens, this protein is Chromosomal replication initiator protein DnaA.